The primary structure comprises 341 residues: DNA-directed RNA polymerase subunit alpha (341 aa).

Positions 1–233 are alpha N-terminal domain (alpha-NTD); the sequence is MLKDGTSVSN…DLLSPFLHTK (233 aa). The interval 262-341 is alpha C-terminal domain (alpha-CTD); it reads SEGDFFKNTF…NEKPRVVGDE (80 aa).

The protein belongs to the RNA polymerase alpha chain family. In terms of assembly, in plastids the minimal PEP RNA polymerase catalytic core is composed of four subunits: alpha, beta, beta', and beta''. When a (nuclear-encoded) sigma factor is associated with the core the holoenzyme is formed, which can initiate transcription.

The protein localises to the plastid. It is found in the chloroplast. It carries out the reaction RNA(n) + a ribonucleoside 5'-triphosphate = RNA(n+1) + diphosphate. In terms of biological role, DNA-dependent RNA polymerase catalyzes the transcription of DNA into RNA using the four ribonucleoside triphosphates as substrates. This chain is DNA-directed RNA polymerase subunit alpha, found in Marsilea quadrifolia (European water clover).